Consider the following 630-residue polypeptide: Adagio-like protein 1 (630 aa).

The interval 1 to 36 (MEWDSESDGAGSIGAGEEEEEEEEEEEGGFGGGGGG) is disordered. Positions 16-28 (GEEEEEEEEEEEG) are enriched in acidic residues. The PAS domain maps to 48-127 (IEGMLRASGP…SEIRKCIDNG (80 aa)). Cys95 is modified (S-4a-FMN cysteine). Residues 216–262 (SSLFQLTDEVLCQSILSRLSPRDIASVSSVCRRLYLLTRNEDLWRMV) form the F-box domain. Kelch repeat units lie at residues 378–428 (LLVV…TLDG), 430–481 (KLVV…VYGG), 483–535 (KILM…AGPP), and 549–601 (RVLI…VVGG).

It belongs to the ADAGIO family. Post-translationally, FMN binds covalently to cysteine after exposure to blue light and is reversed in the dark.

Its subcellular location is the nucleus. Its pathway is protein modification; protein ubiquitination. In terms of biological role, component of an E3 ubiquitin ligase complex that plays a central role in blue light-dependent circadian cycles. Acts as a blue light photoreceptor, due to the presence of FMN, that mediates light-regulated protein degradation of critical clock components by targeting them to the proteasome complex. In Oryza sativa subsp. japonica (Rice), this protein is Adagio-like protein 1.